Consider the following 415-residue polypeptide: Levansucrase (415 aa).

Positions 45, 46, 132, 202, and 203 each coordinate sucrose. Asp-46 serves as the catalytic Nucleophile. Glu-287 serves as the catalytic Proton donor/acceptor.

Belongs to the glycosyl hydrolase 68 family.

The protein resides in the secreted. The enzyme catalyses [6)-beta-D-fructofuranosyl-(2-&gt;](n) alpha-D-glucopyranoside + sucrose = [6)-beta-D-fructofuranosyl-(2-&gt;](n+1) alpha-D-glucopyranoside + D-glucose. Catalyzes the synthesis of levan, a fructose polymer, by transferring the fructosyl moiety from sucrose to a growing acceptor molecule. The polypeptide is Levansucrase (Erwinia amylovora (Fire blight bacteria)).